The sequence spans 519 residues: uncharacterized protein (519 aa).

The next 13 helical transmembrane spans lie at 19–39, 42–62, 87–107, 128–148, 179–199, 220–240, 270–290, 311–331, 345–365, 386–406, 413–433, 475–495, and 496–516; these read FSSSVWSIVPALLAIILAIAT, VLVSLSAGIIIGSLMLSDWQI, MNIVLFLLLLGVLTALLTVSG, LLAASLVFVTFIDDYFHSLAV, VMMPVSSWGAYIITLIGGLLA, FYAIFSIIMVFFVAYFSFDIA, LILPILVLIIATVSMMIYTGA, VGTSLVVGGFCSIIISTLLII, WIVGIKSMSGAIAILFFAWTI, IPMQFLPVILFVLGAAMAFST, FGIMLPIAAAMAANAAPELLL, LPYAATVATATSIGYIVVGFT, and YSGLAGFAATAVSLIVIIFAV.

The protein localises to the cell membrane. This is an uncharacterized protein from Haemophilus influenzae (strain ATCC 51907 / DSM 11121 / KW20 / Rd).